A 428-amino-acid polypeptide reads, in one-letter code: Kynureninase (428 aa).

Residues T104, T105, 132-135, D213, H216, and Y238 each bind pyridoxal 5'-phosphate; that span reads FPSD. K239 is subject to N6-(pyridoxal phosphate)lysine. Positions 267 and 295 each coordinate pyridoxal 5'-phosphate.

It belongs to the kynureninase family. As to quaternary structure, homodimer. Pyridoxal 5'-phosphate serves as cofactor.

It carries out the reaction L-kynurenine + H2O = anthranilate + L-alanine + H(+). The enzyme catalyses 3-hydroxy-L-kynurenine + H2O = 3-hydroxyanthranilate + L-alanine + H(+). It participates in amino-acid degradation; L-kynurenine degradation; L-alanine and anthranilate from L-kynurenine: step 1/1. The protein operates within cofactor biosynthesis; NAD(+) biosynthesis; quinolinate from L-kynurenine: step 2/3. Functionally, catalyzes the cleavage of L-kynurenine (L-Kyn) and L-3-hydroxykynurenine (L-3OHKyn) into anthranilic acid (AA) and 3-hydroxyanthranilic acid (3-OHAA), respectively. This is Kynureninase from Bacillus anthracis.